An 820-amino-acid polypeptide reads, in one-letter code: Sucrose synthase 2 (820 aa).

The interval 276 to 753 (MVFNVVILSP…GLKRIYEKYT (478 aa)) is GT-B glycosyltransferase.

The protein belongs to the glycosyltransferase 1 family. Plant sucrose synthase subfamily.

The enzyme catalyses an NDP-alpha-D-glucose + D-fructose = a ribonucleoside 5'-diphosphate + sucrose + H(+). Sucrose-cleaving enzyme that provides UDP-glucose and fructose for various metabolic pathways. The protein is Sucrose synthase 2 of Tulipa gesneriana (Garden tulip).